Here is a 393-residue protein sequence, read N- to C-terminus: Phosphoglycerate kinase (393 aa).

Substrate is bound by residues 21 to 23 (DLN), arginine 36, 59 to 62 (HLGR), arginine 114, and arginine 147. ATP-binding positions include lysine 198, glutamate 314, and 340-343 (GGDT).

Belongs to the phosphoglycerate kinase family. In terms of assembly, monomer.

The protein localises to the cytoplasm. It catalyses the reaction (2R)-3-phosphoglycerate + ATP = (2R)-3-phospho-glyceroyl phosphate + ADP. It functions in the pathway carbohydrate degradation; glycolysis; pyruvate from D-glyceraldehyde 3-phosphate: step 2/5. In Buchnera aphidicola subsp. Baizongia pistaciae (strain Bp), this protein is Phosphoglycerate kinase.